The chain runs to 275 residues: Large ribosomal subunit protein uL2 (275 aa).

Over residues 38-53 (SSKAGRNNNGRITTRH) the composition is skewed to polar residues. Disordered regions lie at residues 38-60 (SSKAGRNNNGRITTRHQGGGHKQ) and 224-257 (AMNPIDHPHGGGEGRTAAGRDPVSPWGTPTKGFR).

It belongs to the universal ribosomal protein uL2 family. Part of the 50S ribosomal subunit. Forms a bridge to the 30S subunit in the 70S ribosome.

One of the primary rRNA binding proteins. Required for association of the 30S and 50S subunits to form the 70S ribosome, for tRNA binding and peptide bond formation. It has been suggested to have peptidyltransferase activity; this is somewhat controversial. Makes several contacts with the 16S rRNA in the 70S ribosome. This is Large ribosomal subunit protein uL2 from Burkholderia pseudomallei (strain 1106a).